The primary structure comprises 288 residues: Acetyl-coenzyme A carboxylase carboxyl transferase subunit beta (288 aa).

The CoA carboxyltransferase N-terminal domain occupies 34 to 288 (LFSKCPACKV…RLLRMHGGVR (255 aa)). The Zn(2+) site is built by C38, C41, C56, and C59. The segment at 38–59 (CPACKVILYKNDLGLEKTCQHC) adopts a C4-type zinc-finger fold.

It belongs to the AccD/PCCB family. Acetyl-CoA carboxylase is a heterohexamer composed of biotin carboxyl carrier protein (AccB), biotin carboxylase (AccC) and two subunits each of ACCase subunit alpha (AccA) and ACCase subunit beta (AccD). Requires Zn(2+) as cofactor.

The protein resides in the cytoplasm. The catalysed reaction is N(6)-carboxybiotinyl-L-lysyl-[protein] + acetyl-CoA = N(6)-biotinyl-L-lysyl-[protein] + malonyl-CoA. It participates in lipid metabolism; malonyl-CoA biosynthesis; malonyl-CoA from acetyl-CoA: step 1/1. Component of the acetyl coenzyme A carboxylase (ACC) complex. Biotin carboxylase (BC) catalyzes the carboxylation of biotin on its carrier protein (BCCP) and then the CO(2) group is transferred by the transcarboxylase to acetyl-CoA to form malonyl-CoA. This Streptococcus suis (strain 98HAH33) protein is Acetyl-coenzyme A carboxylase carboxyl transferase subunit beta.